The chain runs to 612 residues: Pentatricopeptide repeat-containing protein At4g14050, mitochondrial (612 aa).

The N-terminal 24 residues, 1-24 (MLIPHYLHQLQLCARNRTLTTAKA), are a transit peptide targeting the mitochondrion. PPR repeat units lie at residues 37–71 (CCPL…DHIA), 72–103 (WASV…GLRP), 104–138 (DDFV…EYAN), 139–169 (DEVV…IRVK), 170–204 (NTIS…NLYS), 205–235 (WTAL…RVDI), 237–271 (DPLV…GFDS), 272–302 (CVFI…MRHR), 303–337 (DVVS…GVKP), 338–373 (NEVT…GIRP), and 374–408 (SLQH…PDEP). Residues 409–485 (TWAALLSACK…DPGHSSVEVR (77 aa)) are type E motif. Residues 486–516 (KETEVFYAGETSHPLKEDIFRLLKKLEEEMR) form a type E(+) motif region. The interval 518-612 (RNGYVPDTSW…GGKCSCNDFW (95 aa)) is type DYW motif.

Belongs to the PPR family. PCMP-H subfamily. As to quaternary structure, interacts with MORF8/RIP1 and MORF1/RIP8.

It localises to the mitochondrion. Functionally, involved in C-to-U editing of mitochondrial RNA. Required specifically for editing the mitochondrial NAD4, MT-CYB/COB and RPL16 transcripts. The sequence is that of Pentatricopeptide repeat-containing protein At4g14050, mitochondrial (PCMP-H13) from Arabidopsis thaliana (Mouse-ear cress).